The sequence spans 236 residues: MEELCFDNQRIWFDPNLLQEDPKACFDASFWQQQGKVIGSAQGRGTTWFVQGETLPMALRHYRRGGLFGKLIEDAYVFTGWEKTRCAEEVALLSTLAVGGVNVPRPVAARATRHGLVYRADLLVEKIDSAKDLVDLLQQAMLPDHVWYAIGRTVRKMHDLQVCHTDLNAHNILVDSRELVWLIDFDKCYTQEGEAWKAKNLSRLHRSFVKEQGKRNIHFSATSWQVLCQGYELPDN.

Asp166 is a catalytic residue.

The protein belongs to the protein kinase superfamily. KdkA/RfaP family.

The protein resides in the cell inner membrane. The catalysed reaction is an alpha-Kdo-(2-&gt;6)-lipid IVA + ATP = a 4-O-phospho-alpha-Kdo-(2-&gt;6)-lipid IVA + ADP + H(+). It participates in bacterial outer membrane biogenesis; LPS core biosynthesis. Catalyzes the ATP-dependent phosphorylation of the 3-deoxy-D-manno-octulosonic acid (Kdo) residue in Kdo-lipid IV(A) at the 4-OH position. In Photobacterium profundum (strain SS9), this protein is 3-deoxy-D-manno-octulosonic acid kinase.